The sequence spans 192 residues: Small ribosomal subunit protein uS4B (192 aa).

The S4 RNA-binding domain maps to 83 to 145 (RRLDNLVYRL…SRKIQTYASN (63 aa)).

This sequence belongs to the universal ribosomal protein uS4 family. Part of the 30S ribosomal subunit. Contacts protein S5. The interaction surface between S4 and S5 is involved in control of translational fidelity.

One of the primary rRNA binding proteins, it binds directly to 16S rRNA where it nucleates assembly of the body of the 30S subunit. Functionally, with S5 and S12 plays an important role in translational accuracy. The sequence is that of Small ribosomal subunit protein uS4B (rpsD2) from Clostridium acetobutylicum (strain ATCC 824 / DSM 792 / JCM 1419 / IAM 19013 / LMG 5710 / NBRC 13948 / NRRL B-527 / VKM B-1787 / 2291 / W).